Reading from the N-terminus, the 251-residue chain is MNSLQKGSYKVIPGSSFSKNSNGLLSIKYNFIPESVDPSRRGVLEKAQEAYRLRLPSTFDDDRPHIFEGSCQRARNVDCVLIFNAKTKTFTLEHIDEIARLNALRNPKVSKTVPSNAITQSDNSQISESKSTSQSAVTTNSTRRKEKELEASKDGKIKPSSSNTRYPAISSKGPITTDTNDEPDMEVMELDDFAKELELGFDQEFNSIDDPSTVSQTASKPISLRGLSSQERDYASSAQAEGISSASEDED.

2 disordered regions span residues 110–187 and 201–251; these read SKTV…DMEV and FDQE…EDED. Positions 112–123 are enriched in polar residues; that stretch reads TVPSNAITQSDN. Low complexity predominate over residues 124–135; sequence SQISESKSTSQS. Basic and acidic residues predominate over residues 143-157; the sequence is RRKEKELEASKDGKI. 2 stretches are compositionally biased toward polar residues: residues 204-220 and 236-251; these read EFNS…TASK and SSAQ…EDED. A Phosphoserine modification is found at serine 247.

It belongs to the EAF family. In terms of assembly, forms a stable heterodimer with ell1. Ell1-eaf1 complex interacts with RNA polymerase II.

The protein localises to the nucleus. Its function is as follows. Activates transcription elongation by RNA polymerase II and pyrophosphorolysis as a complex with ell1. Acts as a transcriptional transactivator of ell1 elongation activities. This is Ell1-associated factor 1 (eaf1) from Schizosaccharomyces pombe (strain 972 / ATCC 24843) (Fission yeast).